Here is a 217-residue protein sequence, read N- to C-terminus: MSKALRTLALSGLVLVGLSACVSVPRGQGSGAAVVEQISDSARQGEAARQAWLQQHPNWSFQGRVAISKDRNGGSGRIDWQQDGPRYRVQLSAPVTRQSWVLTGDTTTGAGRLEGLDGGPRSGSDAEKVLLEATGWTIPVNQMPDWVRALRIADAGAARVELDAAGRPRTVQQDGWTIDFLAWTPASADQPELPQRIEARYGEAKVRLLVDQWTVSP.

Residues 1–20 form the signal peptide; that stretch reads MSKALRTLALSGLVLVGLSA. C21 is lipidated: N-palmitoyl cysteine. C21 carries S-diacylglycerol cysteine lipidation.

This sequence belongs to the LolB family. Monomer.

The protein resides in the cell outer membrane. Functionally, plays a critical role in the incorporation of lipoproteins in the outer membrane after they are released by the LolA protein. The protein is Outer-membrane lipoprotein LolB of Xanthomonas oryzae pv. oryzae (strain MAFF 311018).